A 188-amino-acid polypeptide reads, in one-letter code: Mediator of RNA polymerase II transcription subunit 11 (188 aa).

A coiled-coil region spans residues 46-72 (KNKMEDNANNFKKLITQVENELSAQMQ). Residues 116 to 188 (DPTSDEPQTT…MTDDDDDMEQ (73 aa)) are disordered. Acidic residues predominate over residues 123–141 (QTTEEDEEDGSDDLNEDGA). The segment covering 146–155 (SSTVTSSTTD) has biased composition (low complexity). Residues 171–180 (SQEESGRQMT) are compositionally biased toward basic and acidic residues.

The protein belongs to the Mediator complex subunit 11 family. In terms of assembly, component of the Mediator complex.

It localises to the nucleus. Component of the Mediator complex, a coactivator involved in the regulated transcription of nearly all RNA polymerase II-dependent genes. Mediator functions as a bridge to convey information from gene-specific regulatory proteins to the basal RNA polymerase II transcription machinery. Mediator is recruited to promoters by direct interactions with regulatory proteins and serves as a scaffold for the assembly of a functional pre-initiation complex with RNA polymerase II and the general transcription factors. In Caenorhabditis elegans, this protein is Mediator of RNA polymerase II transcription subunit 11 (mdt-11).